The primary structure comprises 400 residues: Arrestin, lateral eye (400 aa).

The protein belongs to the arrestin family. Post-translationally, phosphorylated.

Its function is as follows. Plays an important role in the photoreceptor transduction. In Limulus polyphemus (Atlantic horseshoe crab), this protein is Arrestin, lateral eye.